A 452-amino-acid polypeptide reads, in one-letter code: UPF0210 protein Ccel_1722 (452 aa).

It belongs to the UPF0210 family. Homodimer.

This chain is UPF0210 protein Ccel_1722, found in Ruminiclostridium cellulolyticum (strain ATCC 35319 / DSM 5812 / JCM 6584 / H10) (Clostridium cellulolyticum).